A 395-amino-acid chain; its full sequence is Transcription termination/antitermination protein NusA (395 aa).

In terms of domain architecture, S1 motif spans 137-201; sequence NSVLMGQVIL…TKKGLLLELS (65 aa). KH domains lie at 243 to 291 and 331 to 378; these read SHNS…TLAL and KVRL…NENE.

This sequence belongs to the NusA family. As to quaternary structure, monomer. Binds directly to the core enzyme of the DNA-dependent RNA polymerase and to nascent RNA.

It localises to the cytoplasm. Functionally, participates in both transcription termination and antitermination. The protein is Transcription termination/antitermination protein NusA of Helicobacter pylori (strain J99 / ATCC 700824) (Campylobacter pylori J99).